The primary structure comprises 460 residues: Bifunctional protein GlmU (460 aa).

The interval 1–229 (MTNYAIILAA…FNESLGVNDR (229 aa)) is pyrophosphorylase. UDP-N-acetyl-alpha-D-glucosamine contacts are provided by residues 8–11 (LAAG), K22, Q72, and 77–78 (GT). Residue D102 participates in Mg(2+) binding. UDP-N-acetyl-alpha-D-glucosamine is bound by residues G139, E154, N169, and N227. Residue N227 participates in Mg(2+) binding. A linker region spans residues 230 to 250 (VALATAETVMRQRITQKHMVN). Residues 251 to 460 (GVTFQNPETV…RLAHHPSRSK (210 aa)) are N-acetyltransferase. Residues R332 and K350 each coordinate UDP-N-acetyl-alpha-D-glucosamine. H362 (proton acceptor) is an active-site residue. Y365 and N376 together coordinate UDP-N-acetyl-alpha-D-glucosamine. Residues A379, 385-386 (NY), S404, A422, and R439 contribute to the acetyl-CoA site.

This sequence in the N-terminal section; belongs to the N-acetylglucosamine-1-phosphate uridyltransferase family. It in the C-terminal section; belongs to the transferase hexapeptide repeat family. As to quaternary structure, homotrimer. It depends on Mg(2+) as a cofactor.

The protein localises to the cytoplasm. It carries out the reaction alpha-D-glucosamine 1-phosphate + acetyl-CoA = N-acetyl-alpha-D-glucosamine 1-phosphate + CoA + H(+). The enzyme catalyses N-acetyl-alpha-D-glucosamine 1-phosphate + UTP + H(+) = UDP-N-acetyl-alpha-D-glucosamine + diphosphate. It functions in the pathway nucleotide-sugar biosynthesis; UDP-N-acetyl-alpha-D-glucosamine biosynthesis; N-acetyl-alpha-D-glucosamine 1-phosphate from alpha-D-glucosamine 6-phosphate (route II): step 2/2. The protein operates within nucleotide-sugar biosynthesis; UDP-N-acetyl-alpha-D-glucosamine biosynthesis; UDP-N-acetyl-alpha-D-glucosamine from N-acetyl-alpha-D-glucosamine 1-phosphate: step 1/1. It participates in bacterial outer membrane biogenesis; LPS lipid A biosynthesis. Catalyzes the last two sequential reactions in the de novo biosynthetic pathway for UDP-N-acetylglucosamine (UDP-GlcNAc). The C-terminal domain catalyzes the transfer of acetyl group from acetyl coenzyme A to glucosamine-1-phosphate (GlcN-1-P) to produce N-acetylglucosamine-1-phosphate (GlcNAc-1-P), which is converted into UDP-GlcNAc by the transfer of uridine 5-monophosphate (from uridine 5-triphosphate), a reaction catalyzed by the N-terminal domain. The chain is Bifunctional protein GlmU from Streptococcus pyogenes serotype M5 (strain Manfredo).